We begin with the raw amino-acid sequence, 122 residues long: Large ribosomal subunit protein uL14 (122 aa).

It belongs to the universal ribosomal protein uL14 family. Part of the 50S ribosomal subunit. Forms a cluster with proteins L3 and L19. In the 70S ribosome, L14 and L19 interact and together make contacts with the 16S rRNA in bridges B5 and B8.

Its function is as follows. Binds to 23S rRNA. Forms part of two intersubunit bridges in the 70S ribosome. This Cutibacterium acnes (strain DSM 16379 / KPA171202) (Propionibacterium acnes) protein is Large ribosomal subunit protein uL14.